Here is a 156-residue protein sequence, read N- to C-terminus: Small ribosomal subunit protein uS7 (156 aa).

The protein belongs to the universal ribosomal protein uS7 family. In terms of assembly, part of the 30S ribosomal subunit. Contacts proteins S9 and S11.

Functionally, one of the primary rRNA binding proteins, it binds directly to 16S rRNA where it nucleates assembly of the head domain of the 30S subunit. Is located at the subunit interface close to the decoding center, probably blocks exit of the E-site tRNA. The protein is Small ribosomal subunit protein uS7 of Paramagnetospirillum magneticum (strain ATCC 700264 / AMB-1) (Magnetospirillum magneticum).